Reading from the N-terminus, the 184-residue chain is Dirigent protein 13 (184 aa).

An N-terminal signal peptide occupies residues 1–25 (MANQIYIISLIFLSVLLYQSTTVLS). C36 and C182 are joined by a disulfide. N55 and N119 each carry an N-linked (GlcNAc...) asparagine glycan.

The protein belongs to the plant dirigent protein family. Homodimer. In terms of tissue distribution, expressed in root vasculature and meristems, cotyledons, flowers, siliques, and leaf trichomes. Localized in the interfascicular/vascular cambia and developing xylem.

It is found in the secreted. The protein localises to the extracellular space. Its subcellular location is the apoplast. Dirigent proteins impart stereoselectivity on the phenoxy radical-coupling reaction, yielding optically active lignans from two molecules of coniferyl alcohol in the biosynthesis of lignans, flavonolignans, and alkaloids and thus plays a central role in plant secondary metabolism. The protein is Dirigent protein 13 (DIR13) of Arabidopsis thaliana (Mouse-ear cress).